The primary structure comprises 125 residues: Large ribosomal subunit protein bL12 (125 aa).

Belongs to the bacterial ribosomal protein bL12 family. In terms of assembly, homodimer. Part of the ribosomal stalk of the 50S ribosomal subunit. Forms a multimeric L10(L12)X complex, where L10 forms an elongated spine to which 2 to 4 L12 dimers bind in a sequential fashion. Binds GTP-bound translation factors.

Its function is as follows. Forms part of the ribosomal stalk which helps the ribosome interact with GTP-bound translation factors. Is thus essential for accurate translation. The protein is Large ribosomal subunit protein bL12 of Anaeromyxobacter dehalogenans (strain 2CP-1 / ATCC BAA-258).